Reading from the N-terminus, the 268-residue chain is Trypsin-like protease (268 aa).

The first 41 residues, 1–41 (MTHTTTIAAKRGGLALAKKAAAAGAVALAVASLQPVSAAHA), serve as a signal peptide directing secretion. The propeptide at 42–45 (ADAR) is activation peptide. The Peptidase S1 domain maps to 46 to 266 (VIGGKPAAQN…FAKDIAKAAS (221 aa)). Cys-67 and Cys-83 are joined by a disulfide. Residues His-82 and Asp-127 each act as charge relay system in the active site. Disulfide bonds link Cys-187–Cys-202 and Cys-213–Cys-242. Catalysis depends on Ser-217, which acts as the Charge relay system.

It belongs to the peptidase S1 family.

Functionally, protease that shows preferential cleavage after Arg and Lys residues. This chain is Trypsin-like protease, found in Streptomyces glaucescens.